Reading from the N-terminus, the 159-residue chain is S-ribosylhomocysteine lyase (159 aa).

Residues His53, His57, and Cys124 each contribute to the Fe cation site.

Belongs to the LuxS family. In terms of assembly, homodimer. Fe cation serves as cofactor.

It catalyses the reaction S-(5-deoxy-D-ribos-5-yl)-L-homocysteine = (S)-4,5-dihydroxypentane-2,3-dione + L-homocysteine. Functionally, involved in the synthesis of autoinducer 2 (AI-2) which is secreted by bacteria and is used to communicate both the cell density and the metabolic potential of the environment. The regulation of gene expression in response to changes in cell density is called quorum sensing. Catalyzes the transformation of S-ribosylhomocysteine (RHC) to homocysteine (HC) and 4,5-dihydroxy-2,3-pentadione (DPD). In Porphyromonas gingivalis (strain ATCC BAA-308 / W83), this protein is S-ribosylhomocysteine lyase.